Here is a 190-residue protein sequence, read N- to C-terminus: Myophilin (190 aa).

The tract at residues 1 to 23 (MSNVPPPSGLSYQVKKKLEGKRD) is disordered. Residues 24-130 (KDQENEALEW…RTLFALGRTC (107 aa)) enclose the Calponin-homology (CH) domain. Residues 165 to 189 (VSLQYGSNKGASQAGINMGKQRMIM) form a Calponin-like repeat.

The protein belongs to the calponin family. Muscle specific.

The polypeptide is Myophilin (Echinococcus granulosus (Hydatid tapeworm)).